A 408-amino-acid polypeptide reads, in one-letter code: Dual-specificity RNA methyltransferase RlmN (408 aa).

The Proton acceptor role is filled by Glu126. One can recognise a Radical SAM core domain in the interval 132–373; that stretch reads EEGRGTLCLS…NQAGYASPIR (242 aa). Residues Cys139 and Cys384 are joined by a disulfide bond. 3 residues coordinate [4Fe-4S] cluster: Cys146, Cys150, and Cys153. Residues 210–211, Ser242, 264–266, and Asn341 contribute to the S-adenosyl-L-methionine site; these read GE and SLH. Catalysis depends on Cys384, which acts as the S-methylcysteine intermediate.

This sequence belongs to the radical SAM superfamily. RlmN family. The cofactor is [4Fe-4S] cluster.

It localises to the cytoplasm. The catalysed reaction is adenosine(2503) in 23S rRNA + 2 reduced [2Fe-2S]-[ferredoxin] + 2 S-adenosyl-L-methionine = 2-methyladenosine(2503) in 23S rRNA + 5'-deoxyadenosine + L-methionine + 2 oxidized [2Fe-2S]-[ferredoxin] + S-adenosyl-L-homocysteine. It carries out the reaction adenosine(37) in tRNA + 2 reduced [2Fe-2S]-[ferredoxin] + 2 S-adenosyl-L-methionine = 2-methyladenosine(37) in tRNA + 5'-deoxyadenosine + L-methionine + 2 oxidized [2Fe-2S]-[ferredoxin] + S-adenosyl-L-homocysteine. In terms of biological role, specifically methylates position 2 of adenine 2503 in 23S rRNA and position 2 of adenine 37 in tRNAs. m2A2503 modification seems to play a crucial role in the proofreading step occurring at the peptidyl transferase center and thus would serve to optimize ribosomal fidelity. In Bartonella henselae (strain ATCC 49882 / DSM 28221 / CCUG 30454 / Houston 1) (Rochalimaea henselae), this protein is Dual-specificity RNA methyltransferase RlmN.